The following is a 344-amino-acid chain: Nicotinate-nucleotide--dimethylbenzimidazole phosphoribosyltransferase (344 aa).

Glu310 (proton acceptor) is an active-site residue.

Belongs to the CobT family.

It catalyses the reaction 5,6-dimethylbenzimidazole + nicotinate beta-D-ribonucleotide = alpha-ribazole 5'-phosphate + nicotinate + H(+). It participates in nucleoside biosynthesis; alpha-ribazole biosynthesis; alpha-ribazole from 5,6-dimethylbenzimidazole: step 1/2. Functionally, catalyzes the synthesis of alpha-ribazole-5'-phosphate from nicotinate mononucleotide (NAMN) and 5,6-dimethylbenzimidazole (DMB). In Shewanella amazonensis (strain ATCC BAA-1098 / SB2B), this protein is Nicotinate-nucleotide--dimethylbenzimidazole phosphoribosyltransferase.